The sequence spans 145 residues: Procyclic form-specific polypeptide B-alpha (145 aa).

The first 27 residues, 1–27 (MAPRSLYLLAVLLFSANLFAGVGFAAA), serve as a signal peptide directing secretion. Positions 28–127 (AEGPEDKGLT…PEPEPGAATL (100 aa)) are disordered. The segment covering 31–52 (PEDKGLTKGGKGKGEKGTKVGA) has biased composition (basic and acidic residues). Repeat copies occupy residues 59–60 (DP), 61–62 (DP), 63–64 (EP), 65–66 (EP), 67–68 (EP), 69–70 (EP), 71–72 (EP), 73–74 (EP), 75–76 (EP), 77–78 (EP), 79–80 (EP), 81–82 (EP), 83–84 (EP), 85–86 (EP), 87–88 (EP), 89–90 (EP), 91–92 (EP), 93–94 (EP), 95–96 (EP), 97–98 (EP), 99–100 (EP), 101–102 (EP), 103–104 (EP), 105–106 (EP), 107–108 (EP), 109–110 (EP), 111–112 (EP), 113–114 (EP), 115–116 (EP), 117–118 (EP), 119–120 (EP), and 121–122 (EP). A 32 X 2 AA tandem repeats of [DE]-P region spans residues 59-122 (DPDPEPEPEP…EPEPEPEPEP (64 aa)). A compositionally biased stretch (acidic residues) spans 60-120 (PDPEPEPEPE…EPEPEPEPEP (61 aa)). Glycine 123 is lipidated: GPI-anchor amidated glycine. Residues 124–145 (AATLKSVALPFAIAAAALVAAF) constitute a propeptide that is removed on maturation.

The protein localises to the cell membrane. Functionally, major surface antigen of procyclic forms. This chain is Procyclic form-specific polypeptide B-alpha (PARPB), found in Trypanosoma brucei brucei.